The sequence spans 732 residues: Zinc/cadmium/lead-transporting P-type ATPase (732 aa).

The Cytoplasmic portion of the chain corresponds to 1-124 (MSTPDNHGKK…QAADEPQASR (124 aa)). The HMA domain maps to 48 to 112 (TRYSWKVSGM…AVQKAGYSLR (65 aa)). The Zn(2+) site is built by D58, C59, and C62. A helical transmembrane segment spans residues 125–145 (LKENLPLITLIVMMAISWGLE). A topological domain (periplasmic) is located at residue Q146. A helical transmembrane segment spans residues 147–167 (FNHPFGQLAFIATTLVGLYPI). Topologically, residues 168-179 (ARQALRLIKSGS) are cytoplasmic. A helical membrane pass occupies residues 180–197 (YFAIETLMSVAAIGALFI). Residues 198–202 (GATAE) lie on the Periplasmic side of the membrane. The chain crosses the membrane as a helical span at residues 203 to 222 (AAMVLLLFLIGERLEGWAAS). At 223 to 356 (RARQGVSALM…IDRFSRIYTP (134 aa)) the chain is on the cytoplasmic side. The helical transmembrane segment at 357–377 (AIMAVALLVTLVPPLLFAASW) threads the bilayer. Residues 378-383 (QEWIYK) are Periplasmic-facing. Residues 384-404 (GLTLLLIGCPCALVISTPAAI) form a helical membrane-spanning segment. Positions 392 and 394 each coordinate Zn(2+). Over 405–685 (TSGLAAAARR…RATHANIRQN (281 aa)) the chain is Cytoplasmic. Catalysis depends on D436, which acts as the 4-aspartylphosphate intermediate. The Mg(2+) site is built by D436, T438, and D628. The chain crosses the membrane as a helical span at residues 686–702 (ITIALGLKGIFLVTTLL). Topologically, residues 703–707 (GMTGL) are periplasmic. A helical transmembrane segment spans residues 708–729 (WLAVLADTGATVLVTANALRLL). Residue D714 coordinates Zn(2+). The Cytoplasmic segment spans residues 730–732 (RRR).

Belongs to the cation transport ATPase (P-type) (TC 3.A.3) family. Type IB subfamily.

Its subcellular location is the cell inner membrane. The catalysed reaction is Pb(2+)(in) + ATP + H2O = Pb(2+)(out) + ADP + phosphate + H(+). It catalyses the reaction Zn(2+)(in) + ATP + H2O = Zn(2+)(out) + ADP + phosphate + H(+). It carries out the reaction Cd(2+)(in) + ATP + H2O = Cd(2+)(out) + ADP + phosphate + H(+). Functionally, confers resistance to zinc, cadmium and lead. Couples the hydrolysis of ATP with the export of zinc, cadmium or lead. The sequence is that of Zinc/cadmium/lead-transporting P-type ATPase from Shigella sonnei (strain Ss046).